The sequence spans 470 residues: Mitogen-activated protein kinase 15 (470 aa).

The region spanning 13–306 (FDLQKRLGKG…VEQCLVHPYV (294 aa)) is the Protein kinase domain. ATP contacts are provided by residues 19–27 (LGKGAYGIV) and Lys42. The active-site Proton acceptor is the Asp137. Thr178 bears the Phosphothreonine mark. The TXY signature appears at 178–180 (TEY). Tyr180 carries the post-translational modification Phosphotyrosine. Positions 362 to 445 (PYGEDKSRAP…PSSIKQRRRS (84 aa)) are disordered. Residues 394–406 (MDKNNSSSHDSSS) show a composition bias toward low complexity. Over residues 409 to 426 (LRERAASAESRTSKDSNG) the composition is skewed to basic and acidic residues.

Belongs to the protein kinase superfamily. CMGC Ser/Thr protein kinase family. MAP kinase subfamily. The cofactor is Mg(2+). In terms of processing, dually phosphorylated on Thr-178 and Tyr-180, which activates the enzyme. Expressed in the URX neuron and in many other head sensory neurons. Isoform a: Expressed in head and tail ciliated sensory neurons, and in mid-body neurons. Isoform c: Expressed in head and tail ciliated sensory neurons, and in mid-body neurons.

Its subcellular location is the cell projection. The protein localises to the cilium. The protein resides in the cilium membrane. It localises to the cytoplasm. It is found in the cytoskeleton. Its subcellular location is the cilium axoneme. The protein localises to the cilium basal body. The protein resides in the cell junction. It localises to the perikaryon. It is found in the dendrite. The enzyme catalyses L-seryl-[protein] + ATP = O-phospho-L-seryl-[protein] + ADP + H(+). It carries out the reaction L-threonyl-[protein] + ATP = O-phospho-L-threonyl-[protein] + ADP + H(+). With respect to regulation, activated by threonine and tyrosine phosphorylation. Functionally, atypical MAPK protein. Regulates primary cilium formation in sensory neurons and the localization of ciliary proteins involved in cilium structure, transport, and signaling. Acts in dopamine (DA) neurons to support synaptic membrane dat-1 availability via activation of rho-1 thereby sustaining normal levels of DA clearance. Plays a role in male mating behavior, probably in part through regulating the localization of the polycystin pkd-2. Functions postembryonically in the URX sensory neurons to constrain URX dendrite growth throughout lifetime, probably by restricting expansion of the subcellular sensory compartment at the dendrite ending. This Caenorhabditis elegans protein is Mitogen-activated protein kinase 15.